Consider the following 432-residue polypeptide: Serine hydroxymethyltransferase (432 aa).

(6S)-5,6,7,8-tetrahydrofolate-binding positions include Leu-127 and 131–133; that span reads GHL. Position 236 is an N6-(pyridoxal phosphate)lysine (Lys-236).

Belongs to the SHMT family. In terms of assembly, homodimer. The cofactor is pyridoxal 5'-phosphate.

The protein resides in the cytoplasm. The enzyme catalyses (6R)-5,10-methylene-5,6,7,8-tetrahydrofolate + glycine + H2O = (6S)-5,6,7,8-tetrahydrofolate + L-serine. It participates in one-carbon metabolism; tetrahydrofolate interconversion. Its pathway is amino-acid biosynthesis; glycine biosynthesis; glycine from L-serine: step 1/1. In terms of biological role, catalyzes the reversible interconversion of serine and glycine with tetrahydrofolate (THF) serving as the one-carbon carrier. This reaction serves as the major source of one-carbon groups required for the biosynthesis of purines, thymidylate, methionine, and other important biomolecules. Also exhibits THF-independent aldolase activity toward beta-hydroxyamino acids, producing glycine and aldehydes, via a retro-aldol mechanism. This Rhizobium rhizogenes (strain K84 / ATCC BAA-868) (Agrobacterium radiobacter) protein is Serine hydroxymethyltransferase.